The primary structure comprises 209 residues: Claudin-4 (209 aa).

Topologically, residues 1–9 (MASMGLQVT) are cytoplasmic. The interval 1–103 (MASMGLQVTG…GVLLSVVGGK (103 aa)) is interaction with EPHA2. A helical membrane pass occupies residues 10–30 (GIALAVLGWLAVMLCCALPMW). At 31–81 (RVTAFIGSNIVTSQTIWEGLWMNCVVQSTGQMQCKVYDSLLALPQDLQAAR) the chain is on the extracellular side. Cys-54 and Cys-64 are joined by a disulfide. Residues 82–102 (ALVIISIIVAALGVLLSVVGG) form a helical membrane-spanning segment. Topologically, residues 103-117 (KCTNCLEDESAKAKT) are cytoplasmic. Residues 118–138 (MIVAGVVFLLAGLLVIVPVSW) traverse the membrane as a helical segment. Over 139–160 (TAHNIIQDFYNPLVASGQKREM) the chain is Extracellular. The chain crosses the membrane as a helical span at residues 161–181 (GASLYVGWAASGLLLLGGGLL). Residues 182 to 209 (CCNCPPRTDKPYSAKYSAARSAAASNYV) lie on the Cytoplasmic side of the membrane. Phosphotyrosine; by EPHA2 is present on Tyr-208. Residues 208–209 (YV) form an interactions with TJP1, TJP2 and TJP3 region.

This sequence belongs to the claudin family. In terms of assembly, interacts with EPHA2; phosphorylates CLDN4 and may regulate tight junctions. Directly interacts with TJP1/ZO-1, TJP2/ZO-2 and TJP3/ZO-3. Interacts with CLDN1. Interacts with CLDN8. In terms of processing, phosphorylated. Phosphorylation by EPHA2 is stimulated by EFNA1 and alters interaction with TJP1.

It is found in the cell junction. It localises to the tight junction. Its subcellular location is the cell membrane. Its function is as follows. Channel-forming tight junction protein that mediates paracellular chloride transport in the kidney. Plays a critical role in the paracellular reabsorption of filtered chloride in the kidney collecting ducts. Claudins play a major role in tight junction-specific obliteration of the intercellular space, through calcium-independent cell-adhesion activity. In Chlorocebus aethiops (Green monkey), this protein is Claudin-4 (CLDN4).